Here is a 283-residue protein sequence, read N- to C-terminus: Shikimate dehydrogenase (NADP(+)) (283 aa).

Shikimate is bound by residues 18-20 (SYS) and Thr-66. Lys-70 acts as the Proton acceptor in catalysis. Shikimate is bound by residues Asn-91 and Asp-106. NADP(+) contacts are provided by residues 130–134 (GAGGA) and Met-225. Residue Tyr-227 participates in shikimate binding. NADP(+) is bound at residue Gly-248.

Belongs to the shikimate dehydrogenase family. As to quaternary structure, homodimer.

It carries out the reaction shikimate + NADP(+) = 3-dehydroshikimate + NADPH + H(+). The protein operates within metabolic intermediate biosynthesis; chorismate biosynthesis; chorismate from D-erythrose 4-phosphate and phosphoenolpyruvate: step 4/7. Functionally, involved in the biosynthesis of the chorismate, which leads to the biosynthesis of aromatic amino acids. Catalyzes the reversible NADPH linked reduction of 3-dehydroshikimate (DHSA) to yield shikimate (SA). The chain is Shikimate dehydrogenase (NADP(+)) from Pelodictyon phaeoclathratiforme (strain DSM 5477 / BU-1).